The chain runs to 360 residues: Histidinol-phosphate aminotransferase (360 aa).

K222 bears the N6-(pyridoxal phosphate)lysine mark.

The protein belongs to the class-II pyridoxal-phosphate-dependent aminotransferase family. Histidinol-phosphate aminotransferase subfamily. Homodimer. Pyridoxal 5'-phosphate is required as a cofactor.

It catalyses the reaction L-histidinol phosphate + 2-oxoglutarate = 3-(imidazol-4-yl)-2-oxopropyl phosphate + L-glutamate. The protein operates within amino-acid biosynthesis; L-histidine biosynthesis; L-histidine from 5-phospho-alpha-D-ribose 1-diphosphate: step 7/9. The sequence is that of Histidinol-phosphate aminotransferase from Listeria welshimeri serovar 6b (strain ATCC 35897 / DSM 20650 / CCUG 15529 / CIP 8149 / NCTC 11857 / SLCC 5334 / V8).